Reading from the N-terminus, the 172-residue chain is Large ribosomal subunit protein uL10 (172 aa).

It belongs to the universal ribosomal protein uL10 family. Part of the ribosomal stalk of the 50S ribosomal subunit. The N-terminus interacts with L11 and the large rRNA to form the base of the stalk. The C-terminus forms an elongated spine to which L12 dimers bind in a sequential fashion forming a multimeric L10(L12)X complex.

Functionally, forms part of the ribosomal stalk, playing a central role in the interaction of the ribosome with GTP-bound translation factors. This is Large ribosomal subunit protein uL10 from Chelativorans sp. (strain BNC1).